The sequence spans 160 residues: Transcription antitermination protein NusB (160 aa).

It belongs to the NusB family.

Functionally, involved in transcription antitermination. Required for transcription of ribosomal RNA (rRNA) genes. Binds specifically to the boxA antiterminator sequence of the ribosomal RNA (rrn) operons. The chain is Transcription antitermination protein NusB from Rhizobium rhizogenes (strain K84 / ATCC BAA-868) (Agrobacterium radiobacter).